We begin with the raw amino-acid sequence, 60 residues long: Putative potassium channel blocker TXKS1 (60 aa).

Residues 1 to 28 (MNRLTTIILMLIVINVIMDDISESKVAA) form the signal peptide. Cystine bridges form between cysteine 32-cysteine 49, cysteine 35-cysteine 55, and cysteine 39-cysteine 57. A Lysine amide modification is found at lysine 59.

In terms of tissue distribution, expressed by the venom gland.

The protein resides in the secreted. Functionally, inhibits potassium channels. The protein is Putative potassium channel blocker TXKS1 of Olivierus martensii (Manchurian scorpion).